The primary structure comprises 479 residues: Glutamyl-tRNA reductase (479 aa).

Substrate-binding positions include 48-51 (TCNR), Ser104, 109-111 (ERQ), and Gln115. The active-site Nucleophile is Cys49. 189–194 (GAGKMG) is an NADP(+) binding site. Residues 417 to 455 (DAGRSLAEAPDADTPDLGEAPSRCPYMTHDPGGDGTETE) are disordered.

The protein belongs to the glutamyl-tRNA reductase family. Homodimer.

The enzyme catalyses (S)-4-amino-5-oxopentanoate + tRNA(Glu) + NADP(+) = L-glutamyl-tRNA(Glu) + NADPH + H(+). Its pathway is porphyrin-containing compound metabolism; protoporphyrin-IX biosynthesis; 5-aminolevulinate from L-glutamyl-tRNA(Glu): step 1/2. Its function is as follows. Catalyzes the NADPH-dependent reduction of glutamyl-tRNA(Glu) to glutamate 1-semialdehyde (GSA). The chain is Glutamyl-tRNA reductase from Salinibacter ruber (strain DSM 13855 / M31).